Consider the following 887-residue polypeptide: Alpha-amylase 3, chloroplastic (887 aa).

A chloroplast-targeting transit peptide spans 1 to 55; the sequence is MSTVPIESLLHHSYLRHNSKVNRGNRSFIPISLNLRSHFTSNKLLHSIGKSVGVS. Cys-499 and Cys-587 are disulfide-bonded. Substrate is bound by residues 545 to 546 and 664 to 669; these read YM and RLDFVR. Residue Asp-666 is the Nucleophile of the active site. The Proton donor role is filled by Glu-691. Substrate contacts are provided by residues Trp-693, Ser-695, Gln-712, Lys-754, 760 to 762, His-773, Gln-779, Lys-857, and Trp-884; that span reads GWW.

Belongs to the glycosyl hydrolase 13 family. Ca(2+) serves as cofactor. In terms of tissue distribution, expressed in developing siliques.

The protein localises to the plastid. It localises to the chloroplast. The enzyme catalyses Endohydrolysis of (1-&gt;4)-alpha-D-glucosidic linkages in polysaccharides containing three or more (1-&gt;4)-alpha-linked D-glucose units.. Redox-regulated, with the highest activity under reducing conditions. The midpoint redox potential is -329 mV. The disulfide bridge between Cys-499 and Cys-587 inhibits catalysis. Inhibited by CuCl(2) and H(2)O(2). Its function is as follows. Possesses endoamylolytic activity in vitro, but seems not required for breakdown of transitory starch in leaves. May be involved in the determination of the final structure of glucans by shortening long linear phospho-oligosaccharides in the chloroplast stroma. Can act on both soluble and insoluble glucan substrates to release small linear and branched malto-oligosaccharides. Works synergistically with beta-amylase toward efficient starch degradation. Has activity against p-nitrophenyl maltoheptaoside (BPNP-G7), amylopectin and beta-limit dextrin. Involved in stress-induced starch degradation. The chain is Alpha-amylase 3, chloroplastic from Arabidopsis thaliana (Mouse-ear cress).